We begin with the raw amino-acid sequence, 176 residues long: Cytochrome b (176 aa).

The next 3 helical transmembrane spans lie at 33–53, 77–98, and 113–133; these read FGSLLGVCLIVQILTGLFLAM, WLLRYLHANGASMFFICLYLHI, and WNVGVILLFAVMATAFMGYVL. Heme b-binding residues include H83 and H97.

The protein belongs to the cytochrome b family. The cytochrome bc1 complex contains 11 subunits: 3 respiratory subunits (MT-CYB, CYC1 and UQCRFS1), 2 core proteins (UQCRC1 and UQCRC2) and 6 low-molecular weight proteins (UQCRH/QCR6, UQCRB/QCR7, UQCRQ/QCR8, UQCR10/QCR9, UQCR11/QCR10 and a cleavage product of UQCRFS1). This cytochrome bc1 complex then forms a dimer. Heme b is required as a cofactor.

Its subcellular location is the mitochondrion inner membrane. In terms of biological role, component of the ubiquinol-cytochrome c reductase complex (complex III or cytochrome b-c1 complex) that is part of the mitochondrial respiratory chain. The b-c1 complex mediates electron transfer from ubiquinol to cytochrome c. Contributes to the generation of a proton gradient across the mitochondrial membrane that is then used for ATP synthesis. The chain is Cytochrome b (MT-CYB) from Nyctinomops aurispinosus (Peale's free-tailed bat).